A 328-amino-acid chain; its full sequence is Cell division protein ZipA (328 aa).

The Periplasmic segment spans residues 1-4; the sequence is MDLN. Residues 5–25 form a helical membrane-spanning segment; that stretch reads TILIIVGIVALVALIVHGLWS. Residues 26–328 lie on the Cytoplasmic side of the membrane; the sequence is NRREKSKYFD…NAEQAYLARV (303 aa). A disordered region spans residues 43–82; sequence TSLTSRSHTQEEMAQPNNISPNTYVENGHTPIPQPTTEKV. Over residues 57–67 the composition is skewed to polar residues; sequence QPNNISPNTYV.

The protein belongs to the ZipA family. In terms of assembly, interacts with FtsZ via their C-terminal domains.

The protein localises to the cell inner membrane. Essential cell division protein that stabilizes the FtsZ protofilaments by cross-linking them and that serves as a cytoplasmic membrane anchor for the Z ring. Also required for the recruitment to the septal ring of downstream cell division proteins. The sequence is that of Cell division protein ZipA from Haemophilus influenzae (strain PittEE).